Here is a 125-residue protein sequence, read N- to C-terminus: Ribonuclease P protein component (125 aa).

The protein belongs to the RnpA family. Consists of a catalytic RNA component (M1 or rnpB) and a protein subunit.

The catalysed reaction is Endonucleolytic cleavage of RNA, removing 5'-extranucleotides from tRNA precursor.. Functionally, RNaseP catalyzes the removal of the 5'-leader sequence from pre-tRNA to produce the mature 5'-terminus. It can also cleave other RNA substrates such as 4.5S RNA. The protein component plays an auxiliary but essential role in vivo by binding to the 5'-leader sequence and broadening the substrate specificity of the ribozyme. This is Ribonuclease P protein component from Oleidesulfovibrio alaskensis (strain ATCC BAA-1058 / DSM 17464 / G20) (Desulfovibrio alaskensis).